The sequence spans 447 residues: Tubulin beta chain (447 aa).

Residues Gln-11, Glu-69, Ser-138, Gly-142, Thr-143, Gly-144, Asn-204, and Asn-226 each coordinate GTP. Position 69 (Glu-69) interacts with Mg(2+).

It belongs to the tubulin family. As to quaternary structure, dimer of alpha and beta chains. A typical microtubule is a hollow water-filled tube with an outer diameter of 25 nm and an inner diameter of 15 nM. Alpha-beta heterodimers associate head-to-tail to form protofilaments running lengthwise along the microtubule wall with the beta-tubulin subunit facing the microtubule plus end conferring a structural polarity. Microtubules usually have 13 protofilaments but different protofilament numbers can be found in some organisms and specialized cells. Requires Mg(2+) as cofactor.

The protein localises to the cytoplasm. The protein resides in the cytoskeleton. Functionally, tubulin is the major constituent of microtubules, a cylinder consisting of laterally associated linear protofilaments composed of alpha- and beta-tubulin heterodimers. Microtubules grow by the addition of GTP-tubulin dimers to the microtubule end, where a stabilizing cap forms. Below the cap, tubulin dimers are in GDP-bound state, owing to GTPase activity of alpha-tubulin. The chain is Tubulin beta chain (TUB2) from Penicillium digitatum (Green mold).